A 105-amino-acid polypeptide reads, in one-letter code: Probable non-functional immunoglobulin lambda variable 5-48 (105 aa).

The N-terminal stretch at 1–19 is a signal peptide; sequence MAWTPLLLLFLSHCTGSLS. The interval 20 to 44 is framework-1; sequence QAVLTQPTSLSASPGASARLTCTLR. An Ig-like domain is found at 20–105; sequence QAVLTQPTSL…NAGILFISGL (86 aa). Residues 45-53 form a complementarity-determining-1 region; that stretch reads SGISVGSYR. Residues 54-70 are framework-2; sequence IYWYQQKPGSPPRYLLN. Residues 71–77 form a complementarity-determining-2 region; sequence YYSDSDK. The interval 78 to 105 is framework-3; that stretch reads HQGSGVPSRFSGSKDASTNAGILFISGL.

Immunoglobulins are composed of two identical heavy chains and two identical light chains; disulfide-linked.

Its subcellular location is the secreted. The protein localises to the cell membrane. In terms of biological role, probable non-functional open reading frame (ORF) of V region of the variable domain of immunoglobulin light chains. Non-functional ORF generally cannot participate in the synthesis of a productive immunoglobulin chain due to altered V-(D)-J or switch recombination and/or splicing site (at mRNA level) and/or conserved amino acid change (protein level). Immunoglobulins, also known as antibodies, are membrane-bound or secreted glycoproteins produced by B lymphocytes. In the recognition phase of humoral immunity, the membrane-bound immunoglobulins serve as receptors which, upon binding of a specific antigen, trigger the clonal expansion and differentiation of B lymphocytes into immunoglobulins-secreting plasma cells. Secreted immunoglobulins mediate the effector phase of humoral immunity, which results in the elimination of bound antigens. The antigen binding site is formed by the variable domain of one heavy chain, together with that of its associated light chain. Thus, each immunoglobulin has two antigen binding sites with remarkable affinity for a particular antigen. The variable domains are assembled by a process called V-(D)-J rearrangement and can then be subjected to somatic hypermutations which, after exposure to antigen and selection, allow affinity maturation for a particular antigen. In Homo sapiens (Human), this protein is Probable non-functional immunoglobulin lambda variable 5-48.